Reading from the N-terminus, the 189-residue chain is Elongation factor P (189 aa).

Belongs to the elongation factor P family.

The protein localises to the cytoplasm. Its pathway is protein biosynthesis; polypeptide chain elongation. Functionally, involved in peptide bond synthesis. Stimulates efficient translation and peptide-bond synthesis on native or reconstituted 70S ribosomes in vitro. Probably functions indirectly by altering the affinity of the ribosome for aminoacyl-tRNA, thus increasing their reactivity as acceptors for peptidyl transferase. In Rhizobium meliloti (strain 1021) (Ensifer meliloti), this protein is Elongation factor P.